The primary structure comprises 156 residues: Perlucin-like protein (156 aa).

The N-terminal stretch at 1–22 is a signal peptide; that stretch reads MGKLTVVGILTLFIFYIVAASG. Intrachain disulfides connect C30–C41, C58–C156, and C131–C147. The 120-residue stretch at 37-156 folds into the C-type lectin domain; that stretch reads YKTNCYFFSP…CNTDQMGYIC (120 aa).

As to expression, component of the organic matrix of calcified shell layers like nacre and prisms.

It localises to the secreted. The chain is Perlucin-like protein from Mytilus galloprovincialis (Mediterranean mussel).